A 485-amino-acid chain; its full sequence is Endo-1,4-beta-xylanase C (485 aa).

Residues 1 to 19 (MKFLQIIPVLLSLTSTTLA) form the signal peptide. The 201-residue stretch at 34 to 234 (KETGNKVGTI…GNGGVSGTAD (201 aa)) folds into the GH11 domain. N-linked (GlcNAc...) asparagine glycans are attached at residues Asn56 and Asn107. Catalysis depends on Glu128, which acts as the Nucleophile. Asn175 carries an N-linked (GlcNAc...) asparagine glycan. Glu221 functions as the Proton donor in the catalytic mechanism. A disordered region spans residues 250–450 (ASPAPAGGAP…PQNASDGGNC (201 aa)). 2 stretches are compositionally biased toward low complexity: residues 265–330 (AGND…QGQH) and 344–354 (GSDFNNWSQGG). 7 repeat units span residues 275 to 280 (GQQPPQ), 281 to 286 (GQQPPQ), 287 to 292 (GQQPPQ), 293 to 298 (GQQPPQ), 299 to 304 (GQQPPQ), 310 to 315 (GQQPPQ), and 316 to 321 (GQQPPQ). A 7 X 6 AA tandem repeats of G-Q-Q-P-P-Q region spans residues 275–321 (GQQPPQGQQPPQGQQPPQGQQPPQGQQPPQGNDQQGQQPPQGQQPPQ). An N-linked (GlcNAc...) asparagine glycan is attached at Asn349. 8 tandem repeats follow at residues 353–361 (GGSPWGGNQ), 362–370 (GGSPWGGNQ), 371–379 (GGNPWGGNQ), 380–388 (GGSPWGGNQ), 389–397 (GGSPWGQGN), 399–407 (GGNPWGGNQ), 408–416 (GGSPWGGNQ), and 417–425 (GGNPWGGNQ). Residues 353–425 (GGSPWGGNQG…QGGNPWGGNQ (73 aa)) are 8 X 9 AA tandem repeats of G-G-[SN]-P-W-G-G-N-Q. Positions 355-425 (SPWGGNQGGS…QGGNPWGGNQ (71 aa)) are enriched in gly residues. Low complexity predominate over residues 426-445 (WGAPQNAAAPQSAAAPQNAS). N-linked (GlcNAc...) asparagine glycosylation occurs at Asn443. The region spanning 449 to 484 (NCASLWGQCGGQGYNGPSCCSEGSCKPINEYFHQCQ) is the CBM1 domain.

Belongs to the glycosyl hydrolase 11 (cellulase G) family.

The protein resides in the secreted. It carries out the reaction Endohydrolysis of (1-&gt;4)-beta-D-xylosidic linkages in xylans.. It participates in glycan degradation; xylan degradation. In terms of biological role, endo-1,4-beta-xylanase involved in the hydrolysis of xylan, a major structural heterogeneous polysaccharide found in plant biomass representing the second most abundant polysaccharide in the biosphere, after cellulose. In Neocallimastix patriciarum (Rumen fungus), this protein is Endo-1,4-beta-xylanase C (xynC).